Reading from the N-terminus, the 342-residue chain is [Citrate [pro-3S]-lyase] ligase (342 aa).

Positions 1-127 constitute an N-acetyltransferase domain; the sequence is MTLILKRVQL…RAVLMENSRE (127 aa).

The enzyme catalyses holo-[citrate lyase ACP] + acetate + ATP = acetyl-[citrate lyase ACP] + AMP + diphosphate. In terms of biological role, acetylation of prosthetic group (2-(5''-phosphoribosyl)-3'-dephosphocoenzyme-A) of the gamma subunit of citrate lyase. This is [Citrate [pro-3S]-lyase] ligase (citC) from Klebsiella pneumoniae.